The chain runs to 114 residues: Large ribosomal subunit protein uL22 (114 aa).

Belongs to the universal ribosomal protein uL22 family. Part of the 50S ribosomal subunit.

Functionally, this protein binds specifically to 23S rRNA; its binding is stimulated by other ribosomal proteins, e.g. L4, L17, and L20. It is important during the early stages of 50S assembly. It makes multiple contacts with different domains of the 23S rRNA in the assembled 50S subunit and ribosome. In terms of biological role, the globular domain of the protein is located near the polypeptide exit tunnel on the outside of the subunit, while an extended beta-hairpin is found that lines the wall of the exit tunnel in the center of the 70S ribosome. In Streptococcus pyogenes serotype M6 (strain ATCC BAA-946 / MGAS10394), this protein is Large ribosomal subunit protein uL22.